Here is a 298-residue protein sequence, read N- to C-terminus: MPSKYLFTVIIPTYNCCQYIKKALDSLLLQNEYFLKTQVLIVNDGSLDNTKEVVSDYLIKYSNISYFEKTNGNWGSVINYVKKNKLALGQYITVLDSDDYFLKDSFKKVARFFGHDMIIGAFYCYINENKTRFLKPYFGKTGVIKEHTKLRTPHSQPIAKFYSNKLFYELHDLKEKLFFQDCLMYHDAINRVESVFYLREPLAVWFSTRPGNSTTTSWENPNKFNAWCEILQKMNLYGAGIVIYIYTMLPGFLKQLKKKQLILNLNHKPAYTWLPKPLAFIFGGLMAFKTRKYIKYPK.

The protein belongs to the glycosyltransferase 2 family.

This is an uncharacterized protein from Mycoplasma genitalium (strain ATCC 33530 / DSM 19775 / NCTC 10195 / G37) (Mycoplasmoides genitalium).